The sequence spans 371 residues: MPHQQMLILFGLLPVATNISTWWNFGSMLLTCSALQVMTGFFLSMHYTANINLAFSSIIHITRDVPHGWMMQNLHAIGASMFFICIYMHIARGLYYGSYLNKETWLSGTTLLIMLMATAFFGYVLPWGQMSFWAATVITNLLTAVPYLGTTMTTWLWGGFAINDPTLTRFFALHFILPFGIISMSSVHIMLLHEDGSANPLGTNSDIDKIPFHPYHTYKDLLVISMMIITVLLTVSFFPDIMNDPENFSKANPLVTPQHIKPEWYFLFAYGILRSIPNKLGGALALVMSIMILLTMPFTHTSTLRSMTFRPLMQFMFWTLVATFTVITWTATKPVEPPFTTISQVASIIYFMFFMSNPILGWMENKITKHN.

Helical transmembrane passes span Phe25–Met45, Trp69–Ile90, Trp105–Leu125, and Phe170–Met190. Heme b-binding residues include His75 and His89. Positions 174 and 188 each coordinate heme b. An a ubiquinone-binding site is contributed by His193. 4 consecutive transmembrane segments (helical) span residues Tyr218 to Phe238, Leu280 to His300, Leu312 to Thr332, and Phe339 to Pro358.

It belongs to the cytochrome b family. The cytochrome bc1 complex contains 3 respiratory subunits (MT-CYB, CYC1 and UQCRFS1), 2 core proteins (UQCRC1 and UQCRC2) and probably 6 low-molecular weight proteins. Requires heme b as cofactor.

Its subcellular location is the mitochondrion inner membrane. Functionally, component of the ubiquinol-cytochrome c reductase complex (complex III or cytochrome b-c1 complex) that is part of the mitochondrial respiratory chain. The b-c1 complex mediates electron transfer from ubiquinol to cytochrome c. Contributes to the generation of a proton gradient across the mitochondrial membrane that is then used for ATP synthesis. The chain is Cytochrome b (MT-CYB) from Candoia carinata (Papuan tree boa).